An 838-amino-acid polypeptide reads, in one-letter code: MGNGLWFVGVIILGAAWGQVHDWTEQTDPWFLDGLGMDRMYWRDTNTGRLWLPNTPDPQKPPRGFLAPPDELNLTTASLPLLRWYEERFCFVLVTTAEFPRDPGQLLYIPKTYLLGRPPNASLPAPTTVEPTAQPPPAVAPLKGLLHNPTASVLLRSRAWVTFSAVPDPEALTFPRGDNVATASHPSGPRDTPPPRPPVGARRHPTTELDITHLHNASTTWLATRGLLRSPGRYVYFSPSASTWPVGIWTTGELVLGCDAALVRARYGREFMGLVISMHDSPPAEVMVVPAGQTLDRVGDPADENPPGALPGPPGGPRYRVFVLGSLTRADNGSALDALRRVGGYPEEGTNYAQFLSRAYAEFFSGDAGAEQGPRPPLFWRLTGLLATSGFAFVNAAHANGAVCLSDLLGFLAHSRALAGLAARGAAGCAADSVFFNVSVLDPTARLQLEARLQHLVAEILEREQSLALHALGYQLAFVLDSPSAYDAVAPSAAHLIDALYAEFLGGRVLTTPVVHRALFYASAVLRQPFLAGVPSAVQRERARRSLLIASALCTSDVAAATNADLRTALARADHQKTLFWLPDHFSPCAASLRFDLDESVFILDALAQATRSETPVEVLAQQTHGLASTLTRWAHYNALIRAFVPEASHRCGGQSANVEPRILVPITHNASYVVTHSPLPRGIGYKLTGVDVRRPLFLTYLTATCEGSTRDIESKRLVRTQNQRDLGLVGAVFMRYTPAGEVMSVLLVDTDNTQQQIAAGPTEGAPSVFSSDVPSTALLLFPNGTVIHLLAFDTQPVAAIAPGFLAASALGVVMITAALAGILKVLRTSVPFFWRRE.

An N-terminal signal peptide occupies residues 1 to 18 (MGNGLWFVGVIILGAAWG). The Virion surface segment spans residues 19–803 (QVHDWTEQTD…DTQPVAAIAP (785 aa)). Asn-73 and Asn-120 each carry an N-linked (GlcNAc...) asparagine; by host glycan. Positions 174-204 (FPRGDNVATASHPSGPRDTPPPRPPVGARRH) are disordered. The N-linked (GlcNAc...) asparagine; by host glycan is linked to Asn-216. An interaction with gL region spans residues 259–323 (DAALVRARYG…PGGPRYRVFV (65 aa)). N-linked (GlcNAc...) asparagine; by host glycosylation is found at Asn-332, Asn-437, Asn-670, and Asn-784. Residues 804 to 824 (GFLAASALGVVMITAALAGIL) traverse the membrane as a helical segment. Residues 825 to 838 (KVLRTSVPFFWRRE) lie on the Intravirion side of the membrane.

This sequence belongs to the herpesviridae glycoprotein H family. As to quaternary structure, interacts with glycoprotein L (gL); this interaction is necessary for the correct processing and cell surface expression of gH. The heterodimer gH/gL seems to interact with gB trimers during fusion. In terms of processing, N-glycosylated, O-glycosylated, and sialylated.

It localises to the virion membrane. It is found in the host cell membrane. Its subcellular location is the host endosome membrane. Functionally, the heterodimer glycoprotein H-glycoprotein L is required for the fusion of viral and plasma membranes leading to virus entry into the host cell. Following initial binding to host receptor, membrane fusion is mediated by the fusion machinery composed of gB and the heterodimer gH/gL. May also be involved in the fusion between the virion envelope and the outer nuclear membrane during virion morphogenesis. The protein is Envelope glycoprotein H of Homo sapiens (Human).